Consider the following 89-residue polypeptide: Phytosulfokines 1 (89 aa).

The signal sequence occupies residues 1-22 (MVNPGRTARALCLLCLALLLLG). A propeptide spanning residues 23–79 (QDTHSRKLLLQEKHSHGVGNGTTTTQEPSRENGGSTGSNNNGQLQFDSAKWEEFHTD) is cleaved from the precursor. The disordered stretch occupies residues 33–70 (QEKHSHGVGNGTTTTQEPSRENGGSTGSNNNGQLQFDS). Asn42 carries an N-linked (GlcNAc...) asparagine glycan. A sulfotyrosine mark is found at Tyr80 and Tyr82. The propeptide occupies 85 to 89 (DVKKP).

It belongs to the phytosulfokine family. Post-translationally, sulfation is important for activity and for the binding to a putative membrane receptor. PSK-alpha is produced by endopeptidase digestion. PSK-beta is produced from PSK-alpha by exopeptidase digestion. In terms of tissue distribution, expressed throughout the seedling. More abundant in fragments containing shoot or root apexes where cells proliferate vigorously.

It localises to the secreted. In terms of biological role, promotes plant cell differentiation, organogenesis and somatic embryogenesis as well as cell proliferation. The chain is Phytosulfokines 1 (PSK1) from Oryza sativa subsp. japonica (Rice).